The chain runs to 455 residues: Rho GTPase-activating protein 3 (455 aa).

A compositionally biased stretch (polar residues) spans 1–12 (MTNFSRSKSTGT). The segment at 1-68 (MTNFSRSKST…HASRSGNGSG (68 aa)) is disordered. Residues 24–33 (GPDKYENIHN) are compositionally biased toward basic and acidic residues. The segment covering 43–54 (STTSTDYYDAST) has biased composition (low complexity). Residues 55–64 (PLSSHASRSG) show a composition bias toward polar residues. The region spanning 105 to 118 (IGWPTEVKHVSHVT) is the CRIB domain. The region spanning 153 to 331 (KSMQCSYDDR…LILMNLKERE (179 aa)) is the Rho-GAP domain. Disordered regions lie at residues 342-366 (KQTSDPSEEWESQHSEILSPEKPNN) and 432-455 (FVSNRDEGRKGREAWSSRLSSLPW). A compositionally biased stretch (basic and acidic residues) spans 435–446 (NRDEGRKGREAW).

In terms of tissue distribution, expressed in differentiating xylem cells.

The protein resides in the cell membrane. Its function is as follows. Acts as a GTPase activator for the Rac-type GTPase by converting it to an inactive GDP-bound state. Involved in secondary wall pattern formation. In association with ROPGEF4, mediates local activation of ARAC10/ROP11 to initiate the distinct pattern of secondary cell walls in xylem cells. The chain is Rho GTPase-activating protein 3 (ROPGAP3) from Arabidopsis thaliana (Mouse-ear cress).